A 400-amino-acid polypeptide reads, in one-letter code: Acetate kinase (400 aa).

Asn-10 is a Mg(2+) binding site. Lys-17 contributes to the ATP binding site. A substrate-binding site is contributed by Arg-91. Residue Asp-150 is the Proton donor/acceptor of the active site. ATP is bound by residues 210–214, 285–287, and 333–337; these read HLGGG, DFR, and GIGEN. Residue Glu-387 coordinates Mg(2+).

This sequence belongs to the acetokinase family. In terms of assembly, homodimer. Requires Mg(2+) as cofactor. Mn(2+) is required as a cofactor.

The protein resides in the cytoplasm. The catalysed reaction is acetate + ATP = acetyl phosphate + ADP. It participates in metabolic intermediate biosynthesis; acetyl-CoA biosynthesis; acetyl-CoA from acetate: step 1/2. Catalyzes the formation of acetyl phosphate from acetate and ATP. Can also catalyze the reverse reaction. This Buchnera aphidicola subsp. Baizongia pistaciae (strain Bp) protein is Acetate kinase.